A 166-amino-acid chain; its full sequence is uncharacterized protein (166 aa).

This is an uncharacterized protein from Orgyia pseudotsugata (Douglas-fir tussock moth).